Here is a 451-residue protein sequence, read N- to C-terminus: Lysine histidine transporter-like 3 (451 aa).

At 1-40 (MKGIPSSSNQILNQDLVEDQSFELEDWLPITASRNANWYY) the chain is on the cytoplasmic side. Residues 41–61 (SAFHNVTAIVGAGVLGLPYAM) form a helical membrane-spanning segment. Topologically, residues 62 to 63 (SE) are extracellular. The chain crosses the membrane as a helical span at residues 64-84 (LGWGPGVVVLILSWVITLYTF). Residues 85-115 (WQMIEMHEMFEGKRFDRYHELGQAAFGKKLG) are Cytoplasmic-facing. A helical transmembrane segment spans residues 116–136 (LYIVVPLQLLVETSACIVYMV). The Extracellular portion of the chain corresponds to 137-159 (TGGESLKKIHQLSVGDYECRKLK). A helical transmembrane segment spans residues 160–177 (VRHFILIFASSQFVLSLL). Residues 178–182 (KNFNS) are Cytoplasmic-facing. A helical transmembrane segment spans residues 183 to 203 (ISGVSLVAAVMSMSYSTIAWV). At 204 to 227 (ASLTKGVANNVEYGYKRRNNTSVP) the chain is on the extracellular side. Residues 228–248 (LAFLGALGEMAFAYAGHNVVL) form a helical membrane-spanning segment. Residues 249-269 (EIQATIPSTPENPSKRPMWKG) lie on the Cytoplasmic side of the membrane. Residues 270–290 (AIVAYIIVAFCYFPVALVGFW) form a helical membrane-spanning segment. The Extracellular portion of the chain corresponds to 291–309 (TFGNNVEENILKTLRGPKG). A helical transmembrane segment spans residues 310-330 (LIIVANIFVIIHLMGSYQVYA). The Cytoplasmic segment spans residues 331–358 (MPVFDMIESVMIKKWHFSPTRVLRFTIR). The chain crosses the membrane as a helical span at residues 359 to 379 (WTFVAATMGIAVALPHFSALL). Serine 380 is a topological domain (extracellular). A helical membrane pass occupies residues 381–401 (FFGGFIFAPTTYFIPCIIWLI). At 402–413 (LKKPKRFSLSWC) the chain is on the cytoplasmic side. The chain crosses the membrane as a helical span at residues 414 to 434 (INWICIILGVLVMIIAPIGGL). Topologically, residues 435-451 (AKLMNALKQPDSSCKST) are extracellular.

The protein belongs to the amino acid/polyamine transporter 2 family. Amino acid/auxin permease (AAAP) (TC 2.A.18.2) subfamily.

The protein localises to the cell membrane. Amino acid transporter. The chain is Lysine histidine transporter-like 3 from Arabidopsis thaliana (Mouse-ear cress).